We begin with the raw amino-acid sequence, 112 residues long: Cytochrome c3 (112 aa).

Residues H26, H29, C34, C37, H38, H39, C49, C54, H55, H73, C83, C86, H87, C104, C109, and H110 each contribute to the heme c site.

The cofactor is heme.

Participates in sulfate respiration coupled with phosphorylation by transferring electrons from the enzyme dehydrogenase to ferredoxin. The chain is Cytochrome c3 from Megalodesulfovibrio gigas (strain ATCC 19364 / DSM 1382 / NCIMB 9332 / VKM B-1759) (Desulfovibrio gigas).